Here is a 407-residue protein sequence, read N- to C-terminus: Putative aspartate aminotransferase, cytoplasmic 2 (407 aa).

The residue at position 249 (K249) is an N6-(pyridoxal phosphate)lysine.

Belongs to the class-I pyridoxal-phosphate-dependent aminotransferase family. Homodimer. Pyridoxal 5'-phosphate serves as cofactor.

Its subcellular location is the cytoplasm. It carries out the reaction L-aspartate + 2-oxoglutarate = oxaloacetate + L-glutamate. The protein is Putative aspartate aminotransferase, cytoplasmic 2 (GOT1L1) of Bos taurus (Bovine).